Here is a 30-residue protein sequence, read N- to C-terminus: Brevinin-2Rg (30 aa).

Cysteines 24 and 30 form a disulfide.

In terms of tissue distribution, expressed by the skin glands.

It is found in the secreted. Antimicrobial peptide. The polypeptide is Brevinin-2Rg (Pelophylax ridibundus (Marsh frog)).